A 198-amino-acid chain; its full sequence is Endonuclease V (198 aa).

D38 and D101 together coordinate Mg(2+).

The protein belongs to the endonuclease V family. Mg(2+) is required as a cofactor.

Its subcellular location is the cytoplasm. It carries out the reaction Endonucleolytic cleavage at apurinic or apyrimidinic sites to products with a 5'-phosphate.. In terms of biological role, DNA repair enzyme involved in the repair of deaminated bases. Selectively cleaves double-stranded DNA at the second phosphodiester bond 3' to a deoxyinosine leaving behind the intact lesion on the nicked DNA. The protein is Endonuclease V of Saccharolobus islandicus (strain Y.N.15.51 / Yellowstone #2) (Sulfolobus islandicus).